The chain runs to 294 residues: Gap junction delta-3 protein (294 aa).

Residues 1-24 (MGEWAFLGSLLDAVQLQSPLVGRL) lie on the Cytoplasmic side of the membrane. Residues 25–45 (WLVVMLIFRILVLATVGGAVF) traverse the membrane as a helical segment. Topologically, residues 46–76 (EDEQEEFVCNTLQPGCRQTCYDRAFPVSHYR) are extracellular. A helical membrane pass occupies residues 77–97 (FWLFHILLLSAPPVLFVVYSM). Over 98–136 (HRAGKEAGGAEAAAQCAPGLPEAQCAPCALRARRARRCY) the chain is Cytoplasmic. A helical transmembrane segment spans residues 137-157 (LLSVALRLLAELTFLGGQALL). The Extracellular portion of the chain corresponds to 158 to 188 (YGFRVAPHFACAGPPCPHTVDCFVSRPTEKT). The chain crosses the membrane as a helical span at residues 189–209 (VFVLFYFAVGLLSALLSVAEL). The Cytoplasmic segment spans residues 210–294 (GHLLWKGRPR…PATGRRDLAI (85 aa)). A disordered region spans residues 233–294 (EAQKLLPPPP…PATGRRDLAI (62 aa)). The segment covering 238–250 (LPPPPPPPPPPAL) has biased composition (pro residues).

It belongs to the connexin family. Delta-type subfamily. As to quaternary structure, a connexon is composed of a hexamer of connexins. Interacts with TJP1. As to expression, expressed in vascular smooth muscle cells. Found in heart, colon, and artery (at protein level). Found in cerebral cortex, heart, liver, lung, kidney, spleen and testis.

It localises to the cell membrane. It is found in the cell junction. The protein localises to the gap junction. In terms of biological role, one gap junction consists of a cluster of closely packed pairs of transmembrane channels, the connexons, through which materials of low MW diffuse from one cell to a neighboring cell. In Homo sapiens (Human), this protein is Gap junction delta-3 protein (GJD3).